A 404-amino-acid polypeptide reads, in one-letter code: Argininosuccinate synthase (404 aa).

ATP is bound by residues 10-18 (AFSGGLDTS) and A37. Residues Y88 and S93 each coordinate L-citrulline. ATP is bound at residue G118. Positions 120, 124, and 125 each coordinate L-aspartate. Position 124 (N124) interacts with L-citrulline. Residues R128, S179, S188, E264, and Y276 each contribute to the L-citrulline site.

It belongs to the argininosuccinate synthase family. Type 1 subfamily. Homotetramer.

It localises to the cytoplasm. It catalyses the reaction L-citrulline + L-aspartate + ATP = 2-(N(omega)-L-arginino)succinate + AMP + diphosphate + H(+). Its pathway is amino-acid biosynthesis; L-arginine biosynthesis; L-arginine from L-ornithine and carbamoyl phosphate: step 2/3. This Nitrosomonas eutropha (strain DSM 101675 / C91 / Nm57) protein is Argininosuccinate synthase.